The chain runs to 781 residues: Protein translocase subunit SecA 2 (781 aa).

Residues Gln-85, 103-107 (GEGKT), and Asp-491 each bind ATP.

Belongs to the SecA family. In terms of assembly, monomer and homodimer. Part of the essential Sec protein translocation apparatus which comprises SecA, SecYEG and auxiliary proteins SecDF. Other proteins may also be involved.

It is found in the cell membrane. Its subcellular location is the cytoplasm. The enzyme catalyses ATP + H2O + cellular proteinSide 1 = ADP + phosphate + cellular proteinSide 2.. Functionally, part of the Sec protein translocase complex. Interacts with the SecYEG preprotein conducting channel. Has a central role in coupling the hydrolysis of ATP to the transfer of proteins into and across the cell membrane, serving as an ATP-driven molecular motor driving the stepwise translocation of polypeptide chains across the membrane. The chain is Protein translocase subunit SecA 2 from Clostridioides difficile (strain 630) (Peptoclostridium difficile).